The primary structure comprises 447 residues: Chromosomal replication initiator protein DnaA (447 aa).

The domain I, interacts with DnaA modulators stretch occupies residues 1-79 (MVSCENLWQQ…TGQEITVKLI (79 aa)). The domain II stretch occupies residues 79-105 (ITDGLEPHSLIGQESSLPMETTPKNAT). The interval 106 to 322 (ALNGKYTFSR…GALIRAIAYT (217 aa)) is domain III, AAA+ region. Gly150, Gly152, Lys153, and Thr154 together coordinate ATP. Residues 323 to 447 (SLSNVAMTVE…INIAGQAPES (125 aa)) form a domain IV, binds dsDNA region.

It belongs to the DnaA family. In terms of assembly, oligomerizes as a right-handed, spiral filament on DNA at oriC.

It is found in the cytoplasm. In terms of biological role, plays an essential role in the initiation and regulation of chromosomal replication. ATP-DnaA binds to the origin of replication (oriC) to initiate formation of the DNA replication initiation complex once per cell cycle. Binds the DnaA box (a 9 base pair repeat at the origin) and separates the double-stranded (ds)DNA. Forms a right-handed helical filament on oriC DNA; dsDNA binds to the exterior of the filament while single-stranded (ss)DNA is stabiized in the filament's interior. The ATP-DnaA-oriC complex binds and stabilizes one strand of the AT-rich DNA unwinding element (DUE), permitting loading of DNA polymerase. After initiation quickly degrades to an ADP-DnaA complex that is not apt for DNA replication. Binds acidic phospholipids. Its function is as follows. Isolated domain IV (residues 348-447) binds both E.coli and B.subtilis oriC. The chain is Chromosomal replication initiator protein DnaA from Synechocystis sp. (strain ATCC 27184 / PCC 6803 / Kazusa).